A 332-amino-acid chain; its full sequence is SLAM family member 6 (332 aa).

Residues 1–21 (MLWLFQSLLFVFCFGPGNVVS) form the signal peptide. The Extracellular portion of the chain corresponds to 22–226 (QSSLTPLMVN…VKIQYTDTKM (205 aa)). Residues 35–120 (GESVTLPLEF…ISTKTSAKLS (86 aa)) form the Ig-like V-type domain. N-linked (GlcNAc...) asparagine glycans are attached at residues N58, N87, N137, N144, N161, N178, and N203. The 78-residue stretch at 132–209 (NIQVTNHSQL…AVSNLSFSVS (78 aa)) folds into the Ig-like C2-type domain. 2 disulfide bridges follow: C147/C214 and C153/C195. Residues 227 to 247 (ILFMVSGICIVFGFIILLLLV) form a helical membrane-spanning segment. Residues 248-331 (LRKRRDSLSL…FSRATALDNV (84 aa)) are Cytoplasmic-facing. Y274 carries the post-translational modification Phosphotyrosine. At S278 the chain carries Phosphoserine. Short sequence motifs (ITSM) lie at residues 283-288 (TVYASV) and 307-312 (TIYSTI). Y309 carries the post-translational modification Phosphotyrosine.

As to quaternary structure, homodimer. Interacts with PTN6. Interacts (phosphorylated) with PTN11. Interacts (phosphorylated on tyrosine residues) with SH2D1A/SAP and SH2D1B/EAT2; SH2D1A and SH2D1B can associate with the same SLAMF6 molecule; interaction with SH2D1B is mediated by ITSM 2. Phosphorylation in NK cells upon engagment by SLAMF6-expressing target cells is leading to receptor activation. In terms of tissue distribution, expressed by all (resting and activated) natural killer cells (NK), T- and B-lymphocytes. Increased surface expression on T-cells of systemic lupus erythematosus (SLE) patients.

It is found in the cell membrane. In terms of biological role, self-ligand receptor of the signaling lymphocytic activation molecule (SLAM) family. SLAM receptors triggered by homo- or heterotypic cell-cell interactions are modulating the activation and differentiation of a wide variety of immune cells and thus are involved in the regulation and interconnection of both innate and adaptive immune response. Activities are controlled by presence or absence of small cytoplasmic adapter proteins, SH2D1A/SAP and/or SH2D1B/EAT-2. Triggers cytolytic activity only in natural killer cells (NK) expressing high surface densities of natural cytotoxicity receptors. Positive signaling in NK cells implicates phosphorylation of VAV1. NK cell activation seems to depend on SH2D1B and not on SH2D1A. In conjunction with SLAMF1 controls the transition between positive selection and the subsequent expansion and differentiation of the thymocytic natural killer T (NKT) cell lineage. Promotes T-cell differentiation into a helper T-cell Th17 phenotype leading to increased IL-17 secretion; the costimulatory activity requires SH2D1A. Promotes recruitment of RORC to the IL-17 promoter. In conjunction with SLAMF1 and CD84/SLAMF5 may be a negative regulator of the humoral immune response. In the absence of SH2D1A/SAP can transmit negative signals to CD4(+) T-cells and NKT cells. Negatively regulates germinal center formation by inhibiting T-cell:B-cell adhesion; the function probably implicates increased association with PTPN6/SHP-1 via ITSMs in absence of SH2D1A/SAP. However, reported to be involved in maintaining B-cell tolerance in germinal centers and in preventing autoimmunity. The sequence is that of SLAM family member 6 (SLAMF6) from Homo sapiens (Human).